We begin with the raw amino-acid sequence, 310 residues long: Transcriptional activator BRRF1 (310 aa).

This sequence belongs to the lymphocryptovirus BBRF1 family.

In terms of biological role, enhances the ability of BRLF1 to induce lytic infection by cooperating with it to transcriptionally activate the BZLF1 promoter. This is Transcriptional activator BRRF1 from Epstein-Barr virus (strain AG876) (HHV-4).